A 602-amino-acid chain; its full sequence is Pyranose dehydrogenase 1 (602 aa).

A signal peptide spans Met1 to Gly25. A glycan (N-linked (GlcNAc...) asparagine) is linked at Asn100. His128 carries the post-translational modification Tele-8alpha-FAD histidine. Asn200, Asn277, and Asn344 each carry an N-linked (GlcNAc...) asparagine glycan. His537 (proton acceptor) is an active-site residue. Residue His581 is part of the active site.

It belongs to the GMC oxidoreductase family. Monomer. FAD serves as cofactor. Post-translationally, N-glycosylated.

It is found in the secreted. It catalyses the reaction pyranose + acceptor = pyranos-2-ulose + reduced acceptor.. It carries out the reaction pyranose + acceptor = pyranos-3-ulose + reduced acceptor.. The catalysed reaction is pyranose + acceptor = pyranos-2,3-diulose + reduced acceptor.. The enzyme catalyses a pyranoside + acceptor = a pyranosid-3-ulose + reduced acceptor.. It catalyses the reaction a pyranoside + acceptor = a pyranosid-3,4-diulose + reduced acceptor.. Catalyzes the single-oxidation or sequential double oxidation reaction of carbohydrates primarily at carbon-2 and/or carbon-3 with the concomitant reduction of the flavin. The enzyme exhibits a broad sugar substrate specificity, oxidizing different aldopyranoses to the corresponding C-1, C-2, C-3 or C-1,2, C-2,3 and C-3,4 (di)dehydro sugars with substrate-specific regioselectivity. Accepts only a narrow range of electron acceptors such as substituted benzoquinones and complexed metal ions and reacts extremely slowly with O(2) as acceptor. May play a role in the natural recycling of plant matter by oxidizing all major monosaccharides in lignocellulose and by reducing quinone compounds or reactive radical species generated during lignin depolymerization. In Leucoagaricus meleagris (Western flat-topped agaric), this protein is Pyranose dehydrogenase 1.